Consider the following 159-residue polypeptide: 2-C-methyl-D-erythritol 2,4-cyclodiphosphate synthase (159 aa).

2 residues coordinate a divalent metal cation: aspartate 8 and histidine 10. Residues 8 to 10 (DVH) and 34 to 35 (HS) each bind 4-CDP-2-C-methyl-D-erythritol 2-phosphate. Histidine 42 is an a divalent metal cation binding site. Residues 56-58 (DIG), 61-65 (FPDTD), 100-106 (AQAPRML), 132-135 (TTTE), phenylalanine 139, and arginine 142 contribute to the 4-CDP-2-C-methyl-D-erythritol 2-phosphate site.

It belongs to the IspF family. As to quaternary structure, homotrimer. A divalent metal cation is required as a cofactor.

The catalysed reaction is 4-CDP-2-C-methyl-D-erythritol 2-phosphate = 2-C-methyl-D-erythritol 2,4-cyclic diphosphate + CMP. It participates in isoprenoid biosynthesis; isopentenyl diphosphate biosynthesis via DXP pathway; isopentenyl diphosphate from 1-deoxy-D-xylulose 5-phosphate: step 4/6. Involved in the biosynthesis of isopentenyl diphosphate (IPP) and dimethylallyl diphosphate (DMAPP), two major building blocks of isoprenoid compounds. Catalyzes the conversion of 4-diphosphocytidyl-2-C-methyl-D-erythritol 2-phosphate (CDP-ME2P) to 2-C-methyl-D-erythritol 2,4-cyclodiphosphate (ME-CPP) with a corresponding release of cytidine 5-monophosphate (CMP). The chain is 2-C-methyl-D-erythritol 2,4-cyclodiphosphate synthase from Escherichia coli O6:K15:H31 (strain 536 / UPEC).